The primary structure comprises 405 residues: Aspartokinase (405 aa).

2 ACT domains span residues 267-344 (VSME…AKVS) and 345-405 (IVGV…QLDQ).

This sequence belongs to the aspartokinase family.

It catalyses the reaction L-aspartate + ATP = 4-phospho-L-aspartate + ADP. Its pathway is amino-acid biosynthesis; L-lysine biosynthesis via DAP pathway; (S)-tetrahydrodipicolinate from L-aspartate: step 1/4. It functions in the pathway amino-acid biosynthesis; L-methionine biosynthesis via de novo pathway; L-homoserine from L-aspartate: step 1/3. It participates in amino-acid biosynthesis; L-threonine biosynthesis; L-threonine from L-aspartate: step 1/5. This is Aspartokinase (lysC) from Helicobacter pylori (strain ATCC 700392 / 26695) (Campylobacter pylori).